The following is a 98-amino-acid chain: Small ribosomal subunit protein bS20 (98 aa).

A compositionally biased stretch (basic residues) spans 1–15; it reads MAPKKTTKKGGPKKR. The segment at 1–21 is disordered; the sequence is MAPKKTTKKGGPKKRPSAEKR.

The protein belongs to the bacterial ribosomal protein bS20 family.

In terms of biological role, binds directly to 16S ribosomal RNA. The chain is Small ribosomal subunit protein bS20 from Chlamydia felis (strain Fe/C-56) (Chlamydophila felis).